Consider the following 334-residue polypeptide: Dihydroorotate dehydrogenase (quinone) (334 aa).

Residues 59–63 (AGLDK) and Thr-83 contribute to the FMN site. Lys-63 contacts substrate. A substrate-binding site is contributed by 108-112 (NRMGF). FMN-binding residues include Asn-136 and Asn-169. Asn-169 is a substrate binding site. The Nucleophile role is filled by Ser-172. Asn-174 is a substrate binding site. FMN-binding residues include Lys-214 and Thr-242. 243–244 (NT) is a binding site for substrate. FMN-binding positions include Gly-265, Gly-294, and 315–316 (YS).

Belongs to the dihydroorotate dehydrogenase family. Type 2 subfamily. In terms of assembly, monomer. FMN is required as a cofactor.

Its subcellular location is the cell membrane. The catalysed reaction is (S)-dihydroorotate + a quinone = orotate + a quinol. Its pathway is pyrimidine metabolism; UMP biosynthesis via de novo pathway; orotate from (S)-dihydroorotate (quinone route): step 1/1. Its function is as follows. Catalyzes the conversion of dihydroorotate to orotate with quinone as electron acceptor. This is Dihydroorotate dehydrogenase (quinone) from Acinetobacter baumannii (strain AB0057).